We begin with the raw amino-acid sequence, 339 residues long: Heat-inducible transcription repressor HrcA (339 aa).

The protein belongs to the HrcA family.

Its function is as follows. Negative regulator of class I heat shock genes (grpE-dnaK-dnaJ and groELS operons). Prevents heat-shock induction of these operons. This chain is Heat-inducible transcription repressor HrcA, found in Paraburkholderia xenovorans (strain LB400).